Here is a 558-residue protein sequence, read N- to C-terminus: Pentatricopeptide repeat-containing protein At1g06140, mitochondrial (558 aa).

Residues Met-1–Leu-79 constitute a mitochondrion transit peptide. PPR repeat units lie at residues Glu-38–Trp-68, Asn-71–His-103, Asp-108–Lys-142, Asp-143–Arg-173, Asn-174–Leu-208, Asp-209–Asp-243, Ser-245–Arg-275, Asn-276–Pro-310, Asn-311–Met-345, Asp-346–Arg-376, Asn-377–Pro-411, Asn-412–Pro-447, and Glu-448–Ser-482. A type E motif region spans residues Ala-483–Gly-558.

This sequence belongs to the PPR family. PCMP-E subfamily.

It localises to the mitochondrion. This is Pentatricopeptide repeat-containing protein At1g06140, mitochondrial (PCMP-E61) from Arabidopsis thaliana (Mouse-ear cress).